A 199-amino-acid chain; its full sequence is DnaJ homolog subfamily C member 5B (199 aa).

At Ser14 the chain carries Phosphoserine. The J domain maps to 19-84; the sequence is ALYEILGLHK…SKRSIYDKYG (66 aa).

As to quaternary structure, interacts with the chaperone complex consisting of HSC70 and SGTA. Palmitoylated. Palmitoylation is not required for membrane association. In terms of tissue distribution, testis specific.

It localises to the membrane. This Homo sapiens (Human) protein is DnaJ homolog subfamily C member 5B (DNAJC5B).